Here is a 3953-residue protein sequence, read N- to C-terminus: Zinc finger protein 469 (3953 aa).

Disordered regions lie at residues 1-274 (MPGE…VSFQ), 313-465 (WPEE…MFFN), 512-672 (EWQG…FPFP), 763-784 (GHQR…RVPA), 869-1383 (ADEE…HSEL), 1400-1461 (PKPS…DLPV), 1575-1610 (LQRS…SQRR), 1703-1864 (SKTG…GASS), 1884-1947 (VSNT…TVEG), 1991-2030 (KTQG…TGPT), 2070-2700 (LTAA…TLGP), 2716-2915 (AGET…LSDS), 3001-3036 (EMPA…PGNT), and 3072-3110 (GPSF…PAKG). Polar residues predominate over residues 187-198 (PPSSFTSTNYTS). Pro residues-rich tracts occupy residues 202–211 (TPRPPAPGPP) and 324–335 (YPLPTQPAPSPL). Over residues 603 to 623 (STCSSLSPMSSSPANPSSEES) the composition is skewed to low complexity. 2 stretches are compositionally biased toward pro residues: residues 768-780 (PGPP…PAAP) and 896-911 (KAPP…PQTP). The segment covering 944-953 (QQRRGKQLKL) has biased composition (basic residues). The span at 963-975 (AAEGSGSGGGGRA) shows a compositional bias: gly residues. A compositionally biased stretch (basic and acidic residues) spans 981–991 (RRNDGLGERPP). Low complexity predominate over residues 1005-1017 (RADPAPRVPRAAA). Composition is skewed to basic residues over residues 1025–1042 (SRRR…RKAR) and 1058–1070 (KNRR…RRAG). Positions 1082-1093 (PGAEDRRLREYD) are enriched in basic and acidic residues. Acidic residues predominate over residues 1094–1103 (FASESEEDEQ). Residues 1120–1137 (KRKEVELTQGPREDEPQK) show a composition bias toward basic and acidic residues. Low complexity predominate over residues 1158–1177 (PGGSRPGPGRSPQARGPSRS). The span at 1213 to 1229 (EETRPSLDFPQEAKEPE) shows a compositional bias: basic and acidic residues. Composition is skewed to polar residues over residues 1278–1290 (PKPS…TAPH) and 1333–1350 (NPSS…SKIS). Residues 1577 to 1595 (RSKDTRGAPRELAEAESVG) show a composition bias toward basic and acidic residues. Composition is skewed to polar residues over residues 1991–2005 (KTQG…QPEN) and 2014–2024 (NHASVNASPKT). Over residues 2243–2262 (DTPKDSTLRIPEDSRKEKLW) the composition is skewed to basic and acidic residues. Residues 2409–2435 (TAPSSTASDFQSDSPQSHRNASHQTPQ) are compositionally biased toward polar residues. The C2H2-type 1 zinc-finger motif lies at 2472 to 2498 (VTCEVCAASFRSGPGLSRHKARKHRPH). The span at 2488 to 2498 (SRHKARKHRPH) shows a compositional bias: basic residues. A compositionally biased stretch (low complexity) spans 2506 to 2521 (SPAALPAQQPLEPLAQ). Over residues 2534–2546 (SGKERPNHSRGDP) the composition is skewed to basic and acidic residues. The segment covering 2565-2574 (PGSPHSQQLH) has biased composition (low complexity). The span at 2592–2631 (PRPDQAREDELHPKQAEKREGRRWRREPTVDSPSHSEGKS) shows a compositional bias: basic and acidic residues. The segment covering 2632-2642 (NKKRGKLRGRR) has biased composition (basic residues). The segment covering 2664–2676 (PSPAMASYAASPS) has biased composition (low complexity). The segment covering 2777–2787 (DSSRAHSRSEE) has biased composition (basic and acidic residues). Residues 2805-2816 (TSSSPADSTTSS) are compositionally biased toward low complexity. Over residues 2869 to 2879 (LTRKRNPHVYG) the composition is skewed to basic residues. The segment covering 3095-3105 (AAGAGRAQGRG) has biased composition (low complexity). Residues 3115–3137 (YKCKVCFQRFRSLGELDLHKLAH) form a C2H2-type 2 zinc finger. Residues 3232 to 3322 (TEPAPKHHRG…PDPWAGGEPL (91 aa)) are disordered. A compositionally biased stretch (basic and acidic residues) spans 3260–3272 (GEAKKDSPGERAK). The span at 3302–3314 (PGPPRTTPSPSPD) shows a compositional bias: pro residues. C2H2-type zinc fingers lie at residues 3337–3359 (RDCH…LAVH) and 3365–3388 (YLCP…GGAH). The C2H2-type 5; degenerate zinc-finger motif lies at 3418–3442 (FACSSCNYTFAKKEQFDRHMNKHLR). Disordered regions lie at residues 3448–3501 (FAFR…PILS), 3518–3559 (STTK…SPFP), and 3576–3925 (ERPE…HRTA). Residues 3584 to 3602 (PGSPGPLLQQALPLGASLP) are compositionally biased toward low complexity. The segment covering 3633–3651 (CAPDHFQEDHLLQKEKEVS) has biased composition (basic and acidic residues). 2 stretches are compositionally biased toward low complexity: residues 3728–3741 (PGPS…PRPG) and 3749–3759 (QPQPASGQLQS). 2 stretches are compositionally biased toward basic and acidic residues: residues 3876–3892 (EQRK…DRLG) and 3915–3925 (EPAEPHTHRTA).

It belongs to the krueppel C2H2-type zinc-finger protein family. In terms of tissue distribution, detected in cornea, sclera, skin fibroblasts and striated muscle.

It localises to the nucleus. Functionally, may be involved in transcriptional regulation. In Homo sapiens (Human), this protein is Zinc finger protein 469 (ZNF469).